We begin with the raw amino-acid sequence, 288 residues long: ATP synthase gamma chain (288 aa).

It belongs to the ATPase gamma chain family. F-type ATPases have 2 components, CF(1) - the catalytic core - and CF(0) - the membrane proton channel. CF(1) has five subunits: alpha(3), beta(3), gamma(1), delta(1), epsilon(1). CF(0) has three main subunits: a, b and c.

Its subcellular location is the cell membrane. Functionally, produces ATP from ADP in the presence of a proton gradient across the membrane. The gamma chain is believed to be important in regulating ATPase activity and the flow of protons through the CF(0) complex. The protein is ATP synthase gamma chain of Bacillus pumilus (strain SAFR-032).